Reading from the N-terminus, the 65-residue chain is Large ribosomal subunit protein bL33m (65 aa).

The transit peptide at 1-8 directs the protein to the mitochondrion; that stretch reads MLLSAVSF.

This sequence belongs to the bacterial ribosomal protein bL33 family. Component of the mitochondrial ribosome large subunit (39S) which comprises a 16S rRNA and about 50 distinct proteins.

The protein resides in the mitochondrion. The sequence is that of Large ribosomal subunit protein bL33m (Mrpl33) from Mus musculus (Mouse).